The primary structure comprises 99 residues: Putative membrane protein insertion efficiency factor (99 aa).

The protein belongs to the UPF0161 family.

The protein resides in the cell membrane. Could be involved in insertion of integral membrane proteins into the membrane. The chain is Putative membrane protein insertion efficiency factor from Levilactobacillus brevis (strain ATCC 367 / BCRC 12310 / CIP 105137 / JCM 1170 / LMG 11437 / NCIMB 947 / NCTC 947) (Lactobacillus brevis).